The sequence spans 157 residues: MPRPTKFRRVEFFPENNYFVPWGKPKCEIHEVVLKVEELEAMRLKDIEELNQEQCAEKMEISRQTFQNIIDSARKKVAIALTKGKAIKISGGHYTTKLCKLKCIDCGEIYEINYEQDRHLCPNCGSEKVICNKKADFCRRWCKGQNRKEQYEESKNK.

It belongs to the UPF0251 family.

This is UPF0251 protein CLJ_B1488 from Clostridium botulinum (strain 657 / Type Ba4).